We begin with the raw amino-acid sequence, 556 residues long: MNHMERKKEQLRVEVRRAVLQAELATESEVPSVLLEAPKDKAHGDFATNIAMQLARIAKKAPRAIAEELVANFDRKQAGIEKIEIAGPGFINFFLDNGYLRELIPQVLTEKDDYGSSDVGQGEKVLIEFVSANPTGDLHLGHARGAAVGDTIANIMDKAGYKVSREYYINDAGNQIENLAASLNARYLQVLGEDQPMPEDGYHGQDIIDIAKQLVDEAGDQYRQLDEKERLAFMRDYGLKKELEKIKQDLNAYRVEFDKWFSETSLYESGQVERGLQVLKDKNETYEKDGATWLRSTAYGDDKDRVLVKQDGTYTYLTPDISYHLDKFDRGHDRLIDVLGADHHGYIPRMRAAIQALGYDPARFNVQIIQMVSLFQGGEKVKMSKRTGKAVTLRELMEEVGVDATRYFFAMRSPDTHLDFDMDLAVSKSNENPVYYIQYAHARVCSILRQGEELGIPYSANTDLSPIASEKEYELLKAIGEFPGAVAEAATKQIPQRIANYAYDLAQALHSFYNVTRVIDTENKDLSAARLALMKATQMTIKNALALLGVEAPEKM.

A 'HIGH' region motif is present at residues 132–142; that stretch reads ANPTGDLHLGH.

Belongs to the class-I aminoacyl-tRNA synthetase family. In terms of assembly, monomer.

The protein localises to the cytoplasm. The enzyme catalyses tRNA(Arg) + L-arginine + ATP = L-arginyl-tRNA(Arg) + AMP + diphosphate. This Shouchella clausii (strain KSM-K16) (Alkalihalobacillus clausii) protein is Arginine--tRNA ligase.